Reading from the N-terminus, the 453-residue chain is Ribosomal protein uS12 methylthiotransferase RimO (453 aa).

The 116-residue stretch at 5-120 (PKVGFVSLGC…VMQAVHSHLP (116 aa)) folds into the MTTase N-terminal domain. [4Fe-4S] cluster is bound by residues Cys-14, Cys-50, Cys-79, Cys-151, Cys-155, and Cys-158. Residues 137–382 (LTPRHYAYLK…MEVAEEVSAN (246 aa)) enclose the Radical SAM core domain. A TRAM domain is found at 385-453 (QRKIGKTLKV…ADGHDLWGEV (69 aa)).

The protein belongs to the methylthiotransferase family. RimO subfamily. [4Fe-4S] cluster is required as a cofactor.

Its subcellular location is the cytoplasm. The enzyme catalyses L-aspartate(89)-[ribosomal protein uS12]-hydrogen + (sulfur carrier)-SH + AH2 + 2 S-adenosyl-L-methionine = 3-methylsulfanyl-L-aspartate(89)-[ribosomal protein uS12]-hydrogen + (sulfur carrier)-H + 5'-deoxyadenosine + L-methionine + A + S-adenosyl-L-homocysteine + 2 H(+). In terms of biological role, catalyzes the methylthiolation of an aspartic acid residue of ribosomal protein uS12. The protein is Ribosomal protein uS12 methylthiotransferase RimO of Burkholderia orbicola (strain MC0-3).